The sequence spans 141 residues: MKRTMFKSKIHRATVTHADLHYVGSVTVDLDLLDAANILPGEQVAIVDVTNGARLETYTIAGERGSGVIGINGPAAHLVHENDTVILITYAQMTHEEARAHEPRVVHVNQDNRVIQLGNDPAQGIIPGLLRPPFALNNPAL.

The Schiff-base intermediate with substrate; via pyruvic acid role is filled by serine 25. Position 25 is a pyruvic acid (Ser) (serine 25). Threonine 57 contacts substrate. Tyrosine 58 functions as the Proton donor in the catalytic mechanism. 73 to 75 (GPA) is a substrate binding site.

This sequence belongs to the PanD family. As to quaternary structure, heterooctamer of four alpha and four beta subunits. Pyruvate serves as cofactor. In terms of processing, is synthesized initially as an inactive proenzyme, which is activated by self-cleavage at a specific serine bond to produce a beta-subunit with a hydroxyl group at its C-terminus and an alpha-subunit with a pyruvoyl group at its N-terminus.

Its subcellular location is the cytoplasm. The enzyme catalyses L-aspartate + H(+) = beta-alanine + CO2. It functions in the pathway cofactor biosynthesis; (R)-pantothenate biosynthesis; beta-alanine from L-aspartate: step 1/1. Its function is as follows. Catalyzes the pyruvoyl-dependent decarboxylation of aspartate to produce beta-alanine. The polypeptide is Aspartate 1-decarboxylase 1 (Paenarthrobacter aurescens (strain TC1)).